The chain runs to 201 residues: CASP-like protein 2A1 (201 aa).

The tract at residues 1 to 27 is disordered; sequence MEKRDKGSSPMATMMGSRDENEDVENT. The Cytoplasmic portion of the chain corresponds to 1 to 30; the sequence is MEKRDKGSSPMATMMGSRDENEDVENTTRT. Residues 31–51 form a helical membrane-spanning segment; that stretch reads AETMLRLVPMALCVSALVVML. Residues 52-72 lie on the Extracellular side of the membrane; sequence KNTQTNDYGSLSYSDLGAFRY. A helical transmembrane segment spans residues 73–93; sequence LVHVNGICAGYSLLSAVIVAM. Topologically, residues 94–101 are cytoplasmic; that stretch reads PRASTMPR. A helical membrane pass occupies residues 102-122; the sequence is AWAFFLLDQVLTYVILAAGTV. Residues 123 to 152 lie on the Extracellular side of the membrane; the sequence is STEVLYLASKGDTTITWSEACVSFGGFCHK. A helical transmembrane segment spans residues 153-173; that stretch reads ALISIVITFVVVICYAALSLL. Residues 174-201 are Cytoplasmic-facing; it reads SSYKLFSKYDSPVLTYPGKGIEIATFHG.

It belongs to the Casparian strip membrane proteins (CASP) family. As to quaternary structure, homodimer and heterodimers.

Its subcellular location is the cell membrane. The protein is CASP-like protein 2A1 of Populus trichocarpa (Western balsam poplar).